A 100-amino-acid polypeptide reads, in one-letter code: Urease subunit gamma (100 aa).

It belongs to the urease gamma subunit family. As to quaternary structure, heterotrimer of UreA (gamma), UreB (beta) and UreC (alpha) subunits. Three heterotrimers associate to form the active enzyme.

It is found in the cytoplasm. The enzyme catalyses urea + 2 H2O + H(+) = hydrogencarbonate + 2 NH4(+). It functions in the pathway nitrogen metabolism; urea degradation; CO(2) and NH(3) from urea (urease route): step 1/1. This is Urease subunit gamma from Granulibacter bethesdensis (strain ATCC BAA-1260 / CGDNIH1).